Reading from the N-terminus, the 86-residue chain is Neurotoxin 3FTx-LT (86 aa).

Residues 1–21 (MKTLLLTLVVVTIVCLDLGYT) form the signal peptide. Intrachain disulfides connect Cys24/Cys45, Cys27/Cys32, Cys38/Cys63, Cys67/Cys78, and Cys79/Cys84.

Expressed by the venom gland.

The protein resides in the secreted. In terms of biological role, binds with low affinity to muscular (alpha-1-beta-1-delta-epsilon/CHRNA1-CHRNB1-CHRND-CHRNE) and very low affinity to neuronal (alpha-7/CHRNA7) nicotinic acetylcholine receptor (nAChR). This is Neurotoxin 3FTx-LT from Bungarus fasciatus (Banded krait).